The following is a 535-amino-acid chain: Suppressor of cytokine signaling 6 (535 aa).

The span at 80-89 (RLSAKQKSKG) shows a compositional bias: basic residues. The interval 80-105 (RLSAKQKSKGKAGTPSGSSADEDTFS) is disordered. In terms of domain architecture, SH2 spans 384–491 (WYWGPITRWE…TYPVRLTNPV (108 aa)). Positions 486–535 (RLTNPVSRFMQVRSLQYLCRFVIRQYTRIDLIQKLPLPNKMKDYLQEKHY) constitute an SOCS box domain.

Interacts with RBCK1. Interacts with phosphorylated IRS4. Interacts with PIM3. Interacts with KIT (phosphorylated).

The protein operates within protein modification; protein ubiquitination. Its function is as follows. SOCS family proteins form part of a classical negative feedback system that regulates cytokine signal transduction. May be a substrate recognition component of a SCF-like ECS (Elongin BC-CUL2/5-SOCS-box protein) E3 ubiquitin-protein ligase complex which mediates the ubiquitination and subsequent proteasomal degradation of target proteins. Regulates KIT degradation by ubiquitination of the tyrosine-phosphorylated receptor. This is Suppressor of cytokine signaling 6 (SOCS6) from Homo sapiens (Human).